A 416-amino-acid polypeptide reads, in one-letter code: Calreticulin (416 aa).

Residues 1–27 form the signal peptide; the sequence is MATQRRANPSSLHLITVFSLLVAVVSA. An N-linked (GlcNAc...) asparagine glycan is attached at Asn-59. Cys-113 and Cys-145 are oxidised to a cystine. An alpha-D-glucoside contacts are provided by Tyr-117, Lys-119, Tyr-136, and Asp-143. Asn-159 carries an N-linked (GlcNAc...) asparagine glycan. Tandem repeats lie at residues 199-210, 218-229, 235-246, 253-264, 268-278, 282-292, and 296-306. The tract at residues 199-264 is 4 X approximate repeats; sequence KQSGSLYSDW…DAKKPEDWDD (66 aa). The segment covering 215–225 has biased composition (basic and acidic residues); the sequence is TIKDPSAKKPE. The interval 215 to 286 is disordered; sequence TIKDPSAKKP…NPEYKGPWKP (72 aa). 2 stretches are compositionally biased toward acidic residues: residues 226 to 236 and 244 to 253; these read DWDEKEFIDDP and YDDIPEEITD. Residues 268–306 are 3 X approximate repeats; sequence GEWTAPTIPNPEYKGPWKPKKIKNPNYKGKWKAPLIDNP. Glu-326 provides a ligand contact to an alpha-D-glucoside. Basic and acidic residues predominate over residues 355 to 380; the sequence is TWGKQKDAEKAAFEEAEKKREEEESK. Residues 355-416 are disordered; that stretch reads TWGKQKDAEK…SKDDEAHDEL (62 aa). Over residues 386 to 403 the composition is skewed to acidic residues; that stretch reads SDAEEDDDADDDSDDADD. Over residues 404–416 the composition is skewed to basic and acidic residues; it reads KSESKDDEAHDEL. The short motif at 413-416 is the Prevents secretion from ER element; the sequence is HDEL.

It belongs to the calreticulin family.

It is found in the endoplasmic reticulum lumen. Its function is as follows. Molecular calcium-binding chaperone promoting folding, oligomeric assembly and quality control in the ER via the calreticulin/calnexin cycle. This lectin may interact transiently with almost all of the monoglucosylated glycoproteins that are synthesized in the ER. The chain is Calreticulin (CAL1) from Nicotiana plumbaginifolia (Leadwort-leaved tobacco).